A 95-amino-acid chain; its full sequence is DNA-directed RNA polymerase subunit Rpo11 (95 aa).

Belongs to the archaeal Rpo11/eukaryotic RPB11/RPC19 RNA polymerase subunit family. In terms of assembly, part of the RNA polymerase complex.

The protein resides in the cytoplasm. It carries out the reaction RNA(n) + a ribonucleoside 5'-triphosphate = RNA(n+1) + diphosphate. In terms of biological role, DNA-dependent RNA polymerase (RNAP) catalyzes the transcription of DNA into RNA using the four ribonucleoside triphosphates as substrates. The sequence is that of DNA-directed RNA polymerase subunit Rpo11 from Thermococcus onnurineus (strain NA1).